A 498-amino-acid polypeptide reads, in one-letter code: POTE ankyrin domain family member A (498 aa).

5 ANK repeats span residues 98–127 (KKRT…QLHV), 131–160 (KKRT…DPNL), 164–193 (YGNT…DIES), 197–226 (GGLT…NLNA), and 230–259 (FGRT…DVFS). Residues 289–410 (NQMPNNSSGN…SNEKNKVKSQ (122 aa)) form a disordered region. The segment covering 290–302 (QMPNNSSGNSNPE) has biased composition (polar residues). A compositionally biased stretch (basic and acidic residues) spans 303–338 (QDLKLTSEEEPQRLKGSENSQHEKVTQEPDINKDCD). Over residues 348-359 (HGSNNVGLSENL) the composition is skewed to polar residues. The segment covering 392 to 406 (EEYHRPEKKSNEKNK) has biased composition (basic and acidic residues). Residues 469–497 (EHLLELKNSHYEQLTVEVEQMENMVHVLQ) are a coiled coil.

This sequence belongs to the POTE family.

The sequence is that of POTE ankyrin domain family member A (POTEA) from Homo sapiens (Human).